The chain runs to 176 residues: Large ribosomal subunit protein uL10 (176 aa).

Belongs to the universal ribosomal protein uL10 family. As to quaternary structure, part of the ribosomal stalk of the 50S ribosomal subunit. The N-terminus interacts with L11 and the large rRNA to form the base of the stalk. The C-terminus forms an elongated spine to which L12 dimers bind in a sequential fashion forming a multimeric L10(L12)X complex.

In terms of biological role, forms part of the ribosomal stalk, playing a central role in the interaction of the ribosome with GTP-bound translation factors. This is Large ribosomal subunit protein uL10 from Carboxydothermus hydrogenoformans (strain ATCC BAA-161 / DSM 6008 / Z-2901).